The sequence spans 187 residues: Peptidyl-tRNA hydrolase (187 aa).

Tyr14 provides a ligand contact to tRNA. His19 functions as the Proton acceptor in the catalytic mechanism. The tRNA site is built by Tyr64 and Asn66.

Belongs to the PTH family. As to quaternary structure, monomer.

It is found in the cytoplasm. The enzyme catalyses an N-acyl-L-alpha-aminoacyl-tRNA + H2O = an N-acyl-L-amino acid + a tRNA + H(+). Its function is as follows. Hydrolyzes ribosome-free peptidyl-tRNAs (with 1 or more amino acids incorporated), which drop off the ribosome during protein synthesis, or as a result of ribosome stalling. Functionally, catalyzes the release of premature peptidyl moieties from peptidyl-tRNA molecules trapped in stalled 50S ribosomal subunits, and thus maintains levels of free tRNAs and 50S ribosomes. The protein is Peptidyl-tRNA hydrolase of Carboxydothermus hydrogenoformans (strain ATCC BAA-161 / DSM 6008 / Z-2901).